We begin with the raw amino-acid sequence, 779 residues long: Transcriptional regulator QRICH1 (779 aa).

Methionine 1 bears the N-acetylmethionine mark. Positions 6–48 constitute a CARD domain; the sequence is ENTISFEEYIRVKARSVPQHRMKEFLDSLASKGPEALQEFQQT. 2 disordered regions span residues 141–163 and 219–242; these read QGQA…PSPS and ALSP…TASV. Position 346 is a phosphoserine (serine 346). Residues lysine 354 and lysine 359 each participate in a glycyl lysine isopeptide (Lys-Gly) (interchain with G-Cter in SUMO2) cross-link. Residues 420–430 show a composition bias toward low complexity; that stretch reads QQQPQQQTPQE. The segment at 420–443 is disordered; sequence QQQPQQQTPQEQTPPPPQQQQQQQ. Serine 467 bears the Phosphoserine mark.

It localises to the nucleus. It is found in the cytoplasm. Its subcellular location is the cell membrane. Its function is as follows. Transcriptional regulator that acts as a mediator of the integrated stress response (ISR) through transcriptional control of protein homeostasis under conditions of ER stress. Controls the outcome of the unfolded protein response (UPR), an ER-stress response pathway that either promotes recovery of ER homeostasis and cell survival, or triggers the terminal UPR which elicits programmed cell death when ER stress is prolonged and unresolved. ER stress induces QRICH1 translation by a ribosome translation re-initiation mechanism in response to EIF2S1/eIF-2-alpha phosphorylation, and stress-induced QRICH1 regulates a transcriptional program associated with protein translation, protein secretion-mediated proteotoxicity and cell death during the terminal UPR. May cooperate with ATF4 transcription factor signaling to regulate ER homeostasis which is critical for cell viability. Up-regulates CASP3/caspase-3 activity in epithelial cells under ER stress. Central regulator of proteotoxicity associated with ER stress-mediated inflammatory diseases in the intestines and liver. Involved in chondrocyte hypertrophy, a process required for normal longitudinal bone growth. The protein is Transcriptional regulator QRICH1 (QRICH1) of Bos taurus (Bovine).